The primary structure comprises 451 residues: Trigger factor (451 aa).

A PPIase FKBP-type domain is found at 173–258 (GDRVTVDFVG…LKKVEWAHLP (86 aa)).

This sequence belongs to the FKBP-type PPIase family. Tig subfamily.

It localises to the cytoplasm. The catalysed reaction is [protein]-peptidylproline (omega=180) = [protein]-peptidylproline (omega=0). Functionally, involved in protein export. Acts as a chaperone by maintaining the newly synthesized protein in an open conformation. Functions as a peptidyl-prolyl cis-trans isomerase. This Cupriavidus taiwanensis (strain DSM 17343 / BCRC 17206 / CCUG 44338 / CIP 107171 / LMG 19424 / R1) (Ralstonia taiwanensis (strain LMG 19424)) protein is Trigger factor.